A 184-amino-acid polypeptide reads, in one-letter code: Interferon alpha-3 (184 aa).

Residues 1–23 (MALPVSLLMALVVLSCHSSCSLG) form the signal peptide. 2 disulfide bridges follow: Cys-24/Cys-122 and Cys-52/Cys-162.

This sequence belongs to the alpha/beta interferon family.

Its subcellular location is the secreted. Its function is as follows. Produced by macrophages, IFN-alpha have antiviral activities. Interferon stimulates the production of two enzymes: a protein kinase and an oligoadenylate synthetase. This Equus caballus (Horse) protein is Interferon alpha-3.